We begin with the raw amino-acid sequence, 226 residues long: Orotidine 5'-phosphate decarboxylase (226 aa).

Substrate-binding positions include aspartate 8, lysine 30, 58 to 67, threonine 117, arginine 177, glutamine 186, glycine 206, and arginine 207; that span reads DLKLYDIPNT. The Proton donor role is filled by lysine 60.

This sequence belongs to the OMP decarboxylase family. Type 1 subfamily. As to quaternary structure, homodimer.

It catalyses the reaction orotidine 5'-phosphate + H(+) = UMP + CO2. The protein operates within pyrimidine metabolism; UMP biosynthesis via de novo pathway; UMP from orotate: step 2/2. Functionally, catalyzes the decarboxylation of orotidine 5'-monophosphate (OMP) to uridine 5'-monophosphate (UMP). This Campylobacter concisus (strain 13826) protein is Orotidine 5'-phosphate decarboxylase.